The primary structure comprises 208 residues: Protein late bloomer (208 aa).

The next 4 membrane-spanning stretches (helical) occupy residues 10–30, 41–61, 67–87, and 174–194; these read IASI…IGWI, FVIA…LGIF, SVVL…LQIV, and FIIV…LAVF.

Belongs to the tetraspanin (TM4SF) family. As to expression, transiently expressed on motor axons, growth cones and terminal arbors.

The protein resides in the membrane. It is found in the synapse. In terms of biological role, facilitates synapse formation. In Drosophila melanogaster (Fruit fly), this protein is Protein late bloomer (lbm).